The following is a 20-amino-acid chain: Trypsin inhibitor A chain (20 aa).

This sequence belongs to the protease inhibitor I3 (leguminous Kunitz-type inhibitor) family. In terms of assembly, heterodimer of an 'A' and a 'B' chain linked by a disulfide bond.

Its function is as follows. Inhibits trypsin and alpha-chymotrypsin. This is Trypsin inhibitor A chain from Albizia julibrissin (Silk tree).